Reading from the N-terminus, the 190-residue chain is Potassium-transporting ATPase KdpC subunit (190 aa).

Residues leucine 10 to glycine 30 form a helical membrane-spanning segment.

This sequence belongs to the KdpC family. In terms of assembly, the system is composed of three essential subunits: KdpA, KdpB and KdpC.

The protein localises to the cell inner membrane. In terms of biological role, part of the high-affinity ATP-driven potassium transport (or Kdp) system, which catalyzes the hydrolysis of ATP coupled with the electrogenic transport of potassium into the cytoplasm. This subunit acts as a catalytic chaperone that increases the ATP-binding affinity of the ATP-hydrolyzing subunit KdpB by the formation of a transient KdpB/KdpC/ATP ternary complex. In Cronobacter sakazakii (strain ATCC BAA-894) (Enterobacter sakazakii), this protein is Potassium-transporting ATPase KdpC subunit.